A 284-amino-acid polypeptide reads, in one-letter code: Shikimate dehydrogenase (NADP(+)) (284 aa).

Residues 23 to 25 (SLS) and Thr70 contribute to the shikimate site. Lys74 (proton acceptor) is an active-site residue. Glu86 is a binding site for NADP(+). Asn95 and Asp111 together coordinate shikimate. NADP(+) contacts are provided by residues 135–139 (GAGGA), 159–164 (NRTPGR), and Ala227. Residue Tyr229 coordinates shikimate. An NADP(+)-binding site is contributed by Gly251.

It belongs to the shikimate dehydrogenase family. In terms of assembly, homodimer.

It catalyses the reaction shikimate + NADP(+) = 3-dehydroshikimate + NADPH + H(+). The protein operates within metabolic intermediate biosynthesis; chorismate biosynthesis; chorismate from D-erythrose 4-phosphate and phosphoenolpyruvate: step 4/7. Involved in the biosynthesis of the chorismate, which leads to the biosynthesis of aromatic amino acids. Catalyzes the reversible NADPH linked reduction of 3-dehydroshikimate (DHSA) to yield shikimate (SA). This Rubrobacter xylanophilus (strain DSM 9941 / JCM 11954 / NBRC 16129 / PRD-1) protein is Shikimate dehydrogenase (NADP(+)).